A 483-amino-acid polypeptide reads, in one-letter code: Regulatory protein ViaA (483 aa).

The protein belongs to the ViaA family. In terms of assembly, homodimer. Interacts with RavA.

It is found in the cytoplasm. Its function is as follows. Component of the RavA-ViaA chaperone complex, which may act on the membrane to optimize the function of some of the respiratory chains. ViaA stimulates the ATPase activity of RavA. In Salmonella schwarzengrund (strain CVM19633), this protein is Regulatory protein ViaA.